A 163-amino-acid polypeptide reads, in one-letter code: RRM-domain-containing protein ECU01_0840 (163 aa).

Residues 84–163 (CSVKLSNLPL…SLGLSAEIAR (80 aa)) enclose the RRM domain.

In Encephalitozoon cuniculi (strain GB-M1) (Microsporidian parasite), this protein is RRM-domain-containing protein ECU01_0840.